The primary structure comprises 167 residues: CASP-like protein UU1 (167 aa).

Over 1–17 the chain is Cytoplasmic; sequence MVELESQEAVTVASTAD. A helical membrane pass occupies residues 18 to 38; sequence IAVDVSLRLLAAATSLASAVV. The Extracellular portion of the chain corresponds to 39-54; that stretch reads VAANHQQRWGVRVDFT. Residues 55–75 traverse the membrane as a helical segment; it reads LFQVWIGFVAVNLVCTVYAAA. Residues 76–94 lie on the Cytoplasmic side of the membrane; sequence TAAAARKAMGRWWLHHADA. A helical transmembrane segment spans residues 95 to 115; sequence VVVNLEAAATAGAGAIGSIAM. At 116–135 the chain is on the extracellular side; it reads WGNEASGWYAVCRLYRRYCN. The helical transmembrane segment at 136–156 threads the bilayer; the sequence is AGAAALALSLAAVLLLGVACA. Residues 157–167 are Cytoplasmic-facing; the sequence is RSRYPKMPPTT.

Belongs to the Casparian strip membrane proteins (CASP) family. In terms of assembly, homodimer and heterodimers.

The protein localises to the cell membrane. The sequence is that of CASP-like protein UU1 from Oryza sativa subsp. indica (Rice).